The sequence spans 132 residues: UPF0212 protein PYRAB08340 (132 aa).

Belongs to the UPF0212 family.

In Pyrococcus abyssi (strain GE5 / Orsay), this protein is UPF0212 protein PYRAB08340.